The sequence spans 269 residues: MKWLLFPARIVARTRPNLFSLYRRSVSQYLRPRTIQNLQSMAQTPELKTKLFKPLVWIDCEMTGLDHVNDRIIEICCIITDGHLAPVKAADGQGDSHYESVIHYGPEVMNKMNEWCIEHHGNSGLTAKVLASEKTLAQVEDELLEYIQRYIPDKNVGVLAGNSVHMDRLFMVREFPKVIDHLFYRIVDVSSIMEVARRHNPALQARNPKKEAAHTAYSDIKESIAQLQWYMDNYLKPPQETESVESIGSEQPESPSSSTSSLKRQRTDF.

One can recognise an Exonuclease domain in the interval 55–227; it reads LVWIDCEMTG…SDIKESIAQL (173 aa). The active site involves Y184. The tract at residues 240–269 is disordered; the sequence is ETESVESIGSEQPESPSSSTSSLKRQRTDF. Residues 245 to 261 show a composition bias toward low complexity; the sequence is ESIGSEQPESPSSSTSS.

This sequence belongs to the oligoribonuclease family.

It is found in the mitochondrion. 3'-to-5' exoribonuclease specific for small oligoribonucleotides. In Saccharomyces cerevisiae (strain ATCC 204508 / S288c) (Baker's yeast), this protein is Oligoribonuclease, mitochondrial (REX2).